A 283-amino-acid chain; its full sequence is Nucleotide-binding protein ACIAD3059 (283 aa).

An ATP-binding site is contributed by 9 to 16 (GQSGSGKS). A GTP-binding site is contributed by 59 to 62 (DVRS).

It belongs to the RapZ-like family.

Its function is as follows. Displays ATPase and GTPase activities. This is Nucleotide-binding protein ACIAD3059 from Acinetobacter baylyi (strain ATCC 33305 / BD413 / ADP1).